Here is a 263-residue protein sequence, read N- to C-terminus: uncharacterized protein (263 aa).

Residue 17–41 (GGGRGLGAAIALAFAQAGADVLIAS) participates in NAD(+) binding. S147 lines the substrate pocket. Y160 serves as the catalytic Proton acceptor. K164 is a binding site for NAD(+).

It belongs to the short-chain dehydrogenases/reductases (SDR) family.

This is an uncharacterized protein from Mycobacterium tuberculosis (strain CDC 1551 / Oshkosh).